A 945-amino-acid polypeptide reads, in one-letter code: Nonsense-mediated mRNA decay factor SMG8 (945 aa).

Disordered stretches follow at residues 563–604 and 633–671; these read RAEP…SANE and AEAEVEEAEVCDKGSQDNSTSSDTSTESEIELQPKERSA.

Belongs to the SMG8 family.

Involved in nonsense-mediated decay (NMD) of mRNAs containing premature stop codons. Probable component of kinase complex containing nonC and recruited to stalled ribosomes. This is Nonsense-mediated mRNA decay factor SMG8 from Drosophila grimshawi (Hawaiian fruit fly).